The primary structure comprises 340 residues: Anthranilate phosphoribosyltransferase (340 aa).

5-phospho-alpha-D-ribose 1-diphosphate is bound by residues Gly81, 84–85 (GD), Thr89, 91–94 (NIST), 109–117 (KHGNRGATS), and Ser121. Anthranilate is bound at residue Gly81. Ser93 is a Mg(2+) binding site. Position 112 (Asn112) interacts with anthranilate. An anthranilate-binding site is contributed by Arg167. Asp225 and Glu226 together coordinate Mg(2+).

Belongs to the anthranilate phosphoribosyltransferase family. In terms of assembly, homodimer. Requires Mg(2+) as cofactor.

It carries out the reaction N-(5-phospho-beta-D-ribosyl)anthranilate + diphosphate = 5-phospho-alpha-D-ribose 1-diphosphate + anthranilate. It functions in the pathway amino-acid biosynthesis; L-tryptophan biosynthesis; L-tryptophan from chorismate: step 2/5. Its function is as follows. Catalyzes the transfer of the phosphoribosyl group of 5-phosphorylribose-1-pyrophosphate (PRPP) to anthranilate to yield N-(5'-phosphoribosyl)-anthranilate (PRA). This is Anthranilate phosphoribosyltransferase from Methanocorpusculum labreanum (strain ATCC 43576 / DSM 4855 / Z).